The chain runs to 373 residues: Probable neutral protease 2 homolog MCYG_05201 (373 aa).

The signal sequence occupies residues 1–19 (MQFFTALAAVGALVAPALA). The propeptide occupies 20–187 (LPTQVPANQS…AHIVGTIDKR (168 aa)). 2 disulfides stabilise this stretch: Cys195-Cys265 and Cys272-Cys290. Position 314 (His314) interacts with Zn(2+). Residue Glu315 is part of the active site. His318 and Asp329 together coordinate Zn(2+).

This sequence belongs to the peptidase M35 family. Zn(2+) serves as cofactor.

It localises to the secreted. The catalysed reaction is Preferential cleavage of bonds with hydrophobic residues in P1'. Also 3-Asn-|-Gln-4 and 8-Gly-|-Ser-9 bonds in insulin B chain.. Functionally, probable secreted metalloprotease that shows high activities on basic nuclear substrates such as histone and protamine. May be involved in virulence. In Arthroderma otae (strain ATCC MYA-4605 / CBS 113480) (Microsporum canis), this protein is Probable neutral protease 2 homolog MCYG_05201.